The chain runs to 398 residues: Phosphoglycerate kinase (398 aa).

Residues 21 to 23 (DFN), Arg-36, 59 to 62 (HLGR), Arg-119, and Arg-157 each bind substrate. Residues Lys-208, Gly-296, Glu-327, and 354 to 357 (GGDS) each bind ATP.

The protein belongs to the phosphoglycerate kinase family. In terms of assembly, monomer.

The protein localises to the cytoplasm. The catalysed reaction is (2R)-3-phosphoglycerate + ATP = (2R)-3-phospho-glyceroyl phosphate + ADP. It functions in the pathway carbohydrate degradation; glycolysis; pyruvate from D-glyceraldehyde 3-phosphate: step 2/5. This is Phosphoglycerate kinase from Streptococcus equi subsp. equi (strain 4047).